A 406-amino-acid chain; its full sequence is Glucose-1-phosphate adenylyltransferase (406 aa).

Alpha-D-glucose 1-phosphate contacts are provided by residues tyrosine 100, glycine 165, 181 to 182 (EK), and serine 199.

It belongs to the bacterial/plant glucose-1-phosphate adenylyltransferase family. Homotetramer.

It carries out the reaction alpha-D-glucose 1-phosphate + ATP + H(+) = ADP-alpha-D-glucose + diphosphate. Its pathway is glycan biosynthesis; glycogen biosynthesis. Functionally, involved in the biosynthesis of ADP-glucose, a building block required for the elongation reactions to produce glycogen. Catalyzes the reaction between ATP and alpha-D-glucose 1-phosphate (G1P) to produce pyrophosphate and ADP-Glc. In Streptomyces avermitilis (strain ATCC 31267 / DSM 46492 / JCM 5070 / NBRC 14893 / NCIMB 12804 / NRRL 8165 / MA-4680), this protein is Glucose-1-phosphate adenylyltransferase.